The primary structure comprises 185 residues: MALRRILRIDNPDDKKILTTRCHPVRLPNPALKQLVADMFETMHAASGVGLAAPQIGITQRLAVISIPPVVEERPDGSKVEVAPEQNFVLINPEIIKASDQEDVGLEGCLSLPGWYGEVPRAAWVTVEYTDLNGRRQRIRRATGLLGRALQHEIDHLDGILFTERIRDLSTLKDYSEEMAPTAAE.

Fe cation contacts are provided by Cys109 and His152. Glu153 is a catalytic residue. His156 is a binding site for Fe cation.

The protein belongs to the polypeptide deformylase family. It depends on Fe(2+) as a cofactor.

It catalyses the reaction N-terminal N-formyl-L-methionyl-[peptide] + H2O = N-terminal L-methionyl-[peptide] + formate. Removes the formyl group from the N-terminal Met of newly synthesized proteins. Requires at least a dipeptide for an efficient rate of reaction. N-terminal L-methionine is a prerequisite for activity but the enzyme has broad specificity at other positions. This is Peptide deformylase from Roseiflexus sp. (strain RS-1).